A 154-amino-acid chain; its full sequence is Decarboxylase claH (154 aa).

The protein belongs to the tpcK family.

The enzyme catalyses atrochrysone carboxylate + H(+) = atrochrysone + CO2. It functions in the pathway pigment biosynthesis. Functionally, decarboxylase involved in the biosynthesis of the bianthraquinone cladofulvin, a conidial pigment not required for virulence but that plays a role in fitness and resistance to environmental stresses including UV light and low-temperature stress. The pathway begins with the synthesis of atrochrysone thioester by the polyketide synthase (PKS) claG. The atrochrysone carboxyl ACP thioesterase claF then breaks the thioester bond and releases the atrochrysone carboxylic acid from claG. This compound is decarboxylated by claH to yield emodin, which is further converted to chrysophanol hydroquinone by the reductase claC and the dehydratase claB. The cytochrome monooxygenase P450 claM then catalyzes the dimerization of nataloe-emodin to cladofulvin. The sequence is that of Decarboxylase claH from Passalora fulva (Tomato leaf mold).